The sequence spans 244 residues: Orotidine 5'-phosphate decarboxylase (244 aa).

Residues Asp20, Lys42, 70-79 (DLKFFDIPAT), Thr125, Arg186, Gln195, Gly215, and Arg216 each bind substrate. Lys72 acts as the Proton donor in catalysis.

This sequence belongs to the OMP decarboxylase family. Type 1 subfamily. In terms of assembly, homodimer.

The catalysed reaction is orotidine 5'-phosphate + H(+) = UMP + CO2. It functions in the pathway pyrimidine metabolism; UMP biosynthesis via de novo pathway; UMP from orotate: step 2/2. Catalyzes the decarboxylation of orotidine 5'-monophosphate (OMP) to uridine 5'-monophosphate (UMP). This chain is Orotidine 5'-phosphate decarboxylase, found in Xylella fastidiosa (strain M23).